The following is a 506-amino-acid chain: Aldehyde dehydrogenase (506 aa).

218–224 contacts NAD(+); sequence GFGLEAG. Catalysis depends on residues glutamate 262 and cysteine 301.

The protein belongs to the aldehyde dehydrogenase family.

The catalysed reaction is an aldehyde + NAD(+) + H2O = a carboxylate + NADH + 2 H(+). This is Aldehyde dehydrogenase from Rhodospirillum rubrum (strain ATCC 11170 / ATH 1.1.1 / DSM 467 / LMG 4362 / NCIMB 8255 / S1).